The sequence spans 149 residues: UPF0756 membrane protein Nther_1957 (149 aa).

The next 4 helical transmembrane spans lie at Ile-5 to Thr-25, Leu-52 to Pro-72, Leu-85 to Leu-105, and Val-111 to Ala-131.

Belongs to the UPF0756 family.

It localises to the cell membrane. This Natranaerobius thermophilus (strain ATCC BAA-1301 / DSM 18059 / JW/NM-WN-LF) protein is UPF0756 membrane protein Nther_1957.